A 211-amino-acid chain; its full sequence is Ribonuclease T (211 aa).

The Exonuclease domain occupies 24–198 (VVVDVETGGF…YDAEKTAHLF (175 aa)). 4 residues coordinate Mg(2+): Asp27, Glu29, His185, and Asp190. His185 serves as the catalytic Proton donor/acceptor.

It belongs to the RNase T family. Homodimer. It depends on Mg(2+) as a cofactor.

Functionally, trims short 3' overhangs of a variety of RNA species, leaving a one or two nucleotide 3' overhang. Responsible for the end-turnover of tRNA: specifically removes the terminal AMP residue from uncharged tRNA (tRNA-C-C-A). Also appears to be involved in tRNA biosynthesis. The chain is Ribonuclease T from Xylella fastidiosa (strain 9a5c).